Reading from the N-terminus, the 541-residue chain is Glucose-6-phosphate isomerase (541 aa).

Catalysis depends on glutamate 346, which acts as the Proton donor. Residues histidine 377 and lysine 506 contribute to the active site.

The protein belongs to the GPI family.

It is found in the cytoplasm. It catalyses the reaction alpha-D-glucose 6-phosphate = beta-D-fructose 6-phosphate. Its pathway is carbohydrate biosynthesis; gluconeogenesis. It participates in carbohydrate degradation; glycolysis; D-glyceraldehyde 3-phosphate and glycerone phosphate from D-glucose: step 2/4. Functionally, catalyzes the reversible isomerization of glucose-6-phosphate to fructose-6-phosphate. The chain is Glucose-6-phosphate isomerase from Rhizobium johnstonii (strain DSM 114642 / LMG 32736 / 3841) (Rhizobium leguminosarum bv. viciae).